The primary structure comprises 580 residues: Amino-acid acetyltransferase, mitochondrial (580 aa).

The N-acetyltransferase domain occupies 403-560 (LTMQNLFDDK…NPRHKNGVVN (158 aa)).

Belongs to the acetyltransferase family.

The protein resides in the mitochondrion. The enzyme catalyses L-glutamate + acetyl-CoA = N-acetyl-L-glutamate + CoA + H(+). It participates in amino-acid biosynthesis; L-arginine biosynthesis; N(2)-acetyl-L-ornithine from L-glutamate: step 1/4. In terms of biological role, N-acetylglutamate synthase involved in arginine biosynthesis. The sequence is that of Amino-acid acetyltransferase, mitochondrial (ARG2) from Candida dubliniensis (strain CD36 / ATCC MYA-646 / CBS 7987 / NCPF 3949 / NRRL Y-17841) (Yeast).